A 380-amino-acid polypeptide reads, in one-letter code: Cytochrome b (380 aa).

The next 4 helical transmembrane spans lie at 33–53, 77–98, 113–133, and 178–198; these read FGSLLGLCLITQLLTGLFLAM, WLIRNMHANGASFFFICLYMHI, WNIGVVLFLLVMMTSFVGYVL, and FFAFHFLFPFVVAAFTMLHLL. Heme b contacts are provided by histidine 83 and histidine 97. Residues histidine 182 and histidine 196 each contribute to the heme b site. A ubiquinone is bound at residue histidine 201. A run of 4 helical transmembrane segments spans residues 226 to 246, 288 to 308, 320 to 340, and 347 to 367; these read YKDLLGFAVMLLGLTALALFA, LGGVLALLFSILVLMVVPFLH, LTQMLFWVLVADMLVLTWIGG, and FIIIGQVASVLYFSLFLVLFP.

It belongs to the cytochrome b family. In terms of assembly, the cytochrome bc1 complex contains 3 respiratory subunits (MT-CYB, CYC1 and UQCRFS1), 2 core proteins (UQCRC1 and UQCRC2) and probably 6 low-molecular weight proteins. The cofactor is heme b.

The protein localises to the mitochondrion inner membrane. Component of the ubiquinol-cytochrome c reductase complex (complex III or cytochrome b-c1 complex) that is part of the mitochondrial respiratory chain. The b-c1 complex mediates electron transfer from ubiquinol to cytochrome c. Contributes to the generation of a proton gradient across the mitochondrial membrane that is then used for ATP synthesis. The chain is Cytochrome b (mt-cyb) from Gadus morhua (Atlantic cod).